We begin with the raw amino-acid sequence, 212 residues long: phospholipase A2 inhibitor and Ly6/PLAUR domain-containing protein (212 aa).

Positions M1–G24 are cleaved as a signal peptide. Residues L27–N117 form the UPAR/Ly6 domain. 7 disulfides stabilise this stretch: C29–C53, C32–C39, C46–C74, C80–C101, C102–C107, C126–C152, and C145–C173.

Belongs to the CNF-like-inhibitor family.

The protein resides in the secreted. This chain is phospholipase A2 inhibitor and Ly6/PLAUR domain-containing protein (Pinlyp), found in Mus musculus (Mouse).